A 215-amino-acid polypeptide reads, in one-letter code: N-(5'-phosphoribosyl)anthranilate isomerase (215 aa).

This sequence belongs to the TrpF family.

It catalyses the reaction N-(5-phospho-beta-D-ribosyl)anthranilate = 1-(2-carboxyphenylamino)-1-deoxy-D-ribulose 5-phosphate. The protein operates within amino-acid biosynthesis; L-tryptophan biosynthesis; L-tryptophan from chorismate: step 3/5. The chain is N-(5'-phosphoribosyl)anthranilate isomerase from Pelodictyon phaeoclathratiforme (strain DSM 5477 / BU-1).